The primary structure comprises 600 residues: Long-chain-fatty-acid--CoA ligase FadD15 (600 aa).

This sequence belongs to the ATP-dependent AMP-binding enzyme family.

The enzyme catalyses a long-chain fatty acid + ATP + CoA = a long-chain fatty acyl-CoA + AMP + diphosphate. It catalyses the reaction dodecanoate + ATP + CoA = dodecanoyl-CoA + AMP + diphosphate. The catalysed reaction is hexadecanoate + ATP + CoA = hexadecanoyl-CoA + AMP + diphosphate. Its pathway is lipid metabolism; fatty acid biosynthesis. Functionally, catalyzes the activation of long-chain fatty acids as acyl-coenzyme A (acyl-CoA), which are then transferred to the multifunctional polyketide synthase (PKS) type III for further chain extension. This is Long-chain-fatty-acid--CoA ligase FadD15 (fadD15) from Mycobacterium tuberculosis (strain ATCC 25618 / H37Rv).